Here is an 86-residue protein sequence, read N- to C-terminus: Neurotoxin LmNaTx17 (86 aa).

The signal sequence occupies residues 1 to 18; that stretch reads MKILFVIVLAAFFIGVHC. Residues 19–85 form the LCN-type CS-alpha/beta domain; sequence KHGYPVQYSG…TWDYKTGKCR (67 aa). Disulfide bonds link Cys33-Cys84, Cys37-Cys58, Cys44-Cys65, and Cys48-Cys67.

This sequence belongs to the long (4 C-C) scorpion toxin superfamily. Sodium channel inhibitor family. Beta subfamily. As to expression, expressed by the venom gland.

The protein resides in the secreted. Its function is as follows. Binds voltage-independently at site-4 of sodium channels (Nav) and shift the voltage of activation toward more negative potentials thereby affecting sodium channel activation and promoting spontaneous and repetitive firing. This is Neurotoxin LmNaTx17 from Lychas mucronatus (Chinese swimming scorpion).